We begin with the raw amino-acid sequence, 143 residues long: Transcription antitermination protein NusB (143 aa).

Belongs to the NusB family.

Functionally, involved in transcription antitermination. Required for transcription of ribosomal RNA (rRNA) genes. Binds specifically to the boxA antiterminator sequence of the ribosomal RNA (rrn) operons. This is Transcription antitermination protein NusB from Desulforapulum autotrophicum (strain ATCC 43914 / DSM 3382 / VKM B-1955 / HRM2) (Desulfobacterium autotrophicum).